Consider the following 456-residue polypeptide: Exodeoxyribonuclease 7 large subunit (456 aa).

Belongs to the XseA family. As to quaternary structure, heterooligomer composed of large and small subunits.

It localises to the cytoplasm. It catalyses the reaction Exonucleolytic cleavage in either 5'- to 3'- or 3'- to 5'-direction to yield nucleoside 5'-phosphates.. Functionally, bidirectionally degrades single-stranded DNA into large acid-insoluble oligonucleotides, which are then degraded further into small acid-soluble oligonucleotides. This Escherichia coli O157:H7 protein is Exodeoxyribonuclease 7 large subunit.